The chain runs to 422 residues: Tyrosine--tRNA ligase (422 aa).

An L-tyrosine-binding site is contributed by Tyr35. The 'HIGH' region motif lies at 40–49 (PTAPSLHVGH). Residues Tyr170 and Gln174 each coordinate L-tyrosine. Positions 231–235 (KFGKT) match the 'KMSKS' region motif. Lys234 is a binding site for ATP. Residues 353–419 (APVVDLFAEV…GKKNLAAVEI (67 aa)) form the S4 RNA-binding domain.

This sequence belongs to the class-I aminoacyl-tRNA synthetase family. TyrS type 1 subfamily. Homodimer.

Its subcellular location is the cytoplasm. It carries out the reaction tRNA(Tyr) + L-tyrosine + ATP = L-tyrosyl-tRNA(Tyr) + AMP + diphosphate + H(+). In terms of biological role, catalyzes the attachment of tyrosine to tRNA(Tyr) in a two-step reaction: tyrosine is first activated by ATP to form Tyr-AMP and then transferred to the acceptor end of tRNA(Tyr). The sequence is that of Tyrosine--tRNA ligase from Streptomyces coelicolor (strain ATCC BAA-471 / A3(2) / M145).